We begin with the raw amino-acid sequence, 70 residues long: uncharacterized protein (70 aa).

A run of 2 helical transmembrane segments spans residues 13-33 (YYAFAIGLIFILNGVVGLLGF) and 39-59 (QTYAVGLVTWVISFWLAGLII).

It is found in the cell membrane. This is an uncharacterized protein from Escherichia coli O6:H1 (strain CFT073 / ATCC 700928 / UPEC).